A 452-amino-acid chain; its full sequence is Pup--protein ligase (452 aa).

Residue glutamate 9 coordinates Mg(2+). Arginine 53 contacts ATP. Residue tyrosine 55 participates in Mg(2+) binding. Aspartate 57 (proton acceptor) is an active-site residue. Glutamate 63 is a Mg(2+) binding site. ATP is bound by residues threonine 66 and tryptophan 419.

This sequence belongs to the Pup ligase/Pup deamidase family. Pup-conjugating enzyme subfamily.

It carries out the reaction ATP + [prokaryotic ubiquitin-like protein]-L-glutamate + [protein]-L-lysine = ADP + phosphate + N(6)-([prokaryotic ubiquitin-like protein]-gamma-L-glutamyl)-[protein]-L-lysine.. The protein operates within protein degradation; proteasomal Pup-dependent pathway. Its pathway is protein modification; protein pupylation. Its function is as follows. Catalyzes the covalent attachment of the prokaryotic ubiquitin-like protein modifier Pup to the proteasomal substrate proteins, thereby targeting them for proteasomal degradation. This tagging system is termed pupylation. The ligation reaction involves the side-chain carboxylate of the C-terminal glutamate of Pup and the side-chain amino group of a substrate lysine. The polypeptide is Pup--protein ligase (Nakamurella multipartita (strain ATCC 700099 / DSM 44233 / CIP 104796 / JCM 9543 / NBRC 105858 / Y-104) (Microsphaera multipartita)).